A 668-amino-acid polypeptide reads, in one-letter code: Biotin biosynthesis bifunctional protein BioWF (668 aa).

A substrate-binding site is contributed by Arg293. 380-381 lines the pyridoxal 5'-phosphate pocket; it reads GY. His405 lines the substrate pocket. Pyridoxal 5'-phosphate-binding positions include Ser451, 476-479, and 507-510; these read DDAH and TASK. Lys510 is subject to N6-(pyridoxal phosphate)lysine.

It in the N-terminal section; belongs to the BioW family. In the C-terminal section; belongs to the class-II pyridoxal-phosphate-dependent aminotransferase family. BioF subfamily. As to quaternary structure, homodimer. It depends on Mg(2+) as a cofactor. Pyridoxal 5'-phosphate is required as a cofactor.

The catalysed reaction is heptanedioate + ATP + CoA = 6-carboxyhexanoyl-CoA + AMP + diphosphate. It catalyses the reaction 6-carboxyhexanoyl-[ACP] + L-alanine + H(+) = (8S)-8-amino-7-oxononanoate + holo-[ACP] + CO2. Its pathway is metabolic intermediate metabolism; pimeloyl-CoA biosynthesis; pimeloyl-CoA from pimelate: step 1/1. The protein operates within cofactor biosynthesis; biotin biosynthesis. In terms of biological role, catalyzes both the decarboxylative condensation of pimeloyl-[acyl-carrier protein] and L-alanine to produce 8-amino-7-oxononanoate (AON), [acyl-carrier protein], and carbon dioxide, and the transformation of pimelate into pimeloyl-CoA with concomitant hydrolysis of ATP to AMP. This Cutibacterium acnes (strain SK137) (Propionibacterium acnes) protein is Biotin biosynthesis bifunctional protein BioWF.